Consider the following 622-residue polypeptide: Serine/threonine-protein kinase PknB (622 aa).

Topologically, residues 1-328 are cytoplasmic; the sequence is MTTPPHLSDR…TESDGSIGRW (328 aa). Residues 11-273 enclose the Protein kinase domain; the sequence is YELGDILGFG…TAAEMRADLI (263 aa). ATP is bound by residues 17-25, Lys-40, and 93-95; these read LGFGGMSEV and EYV. The active-site Proton acceptor is the Asp-138. Residues 140–143 and Asp-156 contribute to the ATP site; that span reads KPAN. Mg(2+)-binding residues include Asn-143 and Asp-156. A phosphoserine; by autocatalysis mark is found at Ser-166 and Ser-168. 3 positions are modified to phosphothreonine; by autocatalysis: Thr-170, Thr-172, and Thr-308. The chain crosses the membrane as a helical span at residues 329-349; that stretch reads VAVVAVLAVLTIAIVAAFNTF. The Extracellular segment spans residues 350-622; that stretch reads GGNTRDVQVP…DGIITLKFGQ (273 aa). PASTA domains follow at residues 352 to 418, 419 to 486, 487 to 553, and 554 to 622; these read NTRD…NVST, GPEQ…IVGS, GPET…QVSK, and GNQF…KFGQ. The tract at residues 381–404 is disordered; sequence RTLQKPDSTIPPDHVISTEPGANA.

The protein belongs to the protein kinase superfamily. Ser/Thr protein kinase family. In terms of assembly, homodimer. Autophosphorylated. Dephosphorylated by PstP.

The protein localises to the cell membrane. The enzyme catalyses L-seryl-[protein] + ATP = O-phospho-L-seryl-[protein] + ADP + H(+). The catalysed reaction is L-threonyl-[protein] + ATP = O-phospho-L-threonyl-[protein] + ADP + H(+). In terms of biological role, protein kinase that regulates many aspects of mycobacterial physiology. Is a key component of a signal transduction pathway that regulates cell growth, cell shape and cell division via phosphorylation of target proteins. This is Serine/threonine-protein kinase PknB (pknB) from Mycobacterium leprae (strain TN).